The following is a 196-amino-acid chain: Endoribonuclease YbeY (196 aa).

3 residues coordinate Zn(2+): histidine 120, histidine 124, and histidine 130.

It belongs to the endoribonuclease YbeY family. Zn(2+) is required as a cofactor.

The protein localises to the cytoplasm. Its function is as follows. Single strand-specific metallo-endoribonuclease involved in late-stage 70S ribosome quality control and in maturation of the 3' terminus of the 16S rRNA. This chain is Endoribonuclease YbeY, found in Corynebacterium diphtheriae (strain ATCC 700971 / NCTC 13129 / Biotype gravis).